A 158-amino-acid polypeptide reads, in one-letter code: Transcription elongation factor GreA (158 aa).

The protein belongs to the GreA/GreB family.

Functionally, necessary for efficient RNA polymerase transcription elongation past template-encoded arresting sites. The arresting sites in DNA have the property of trapping a certain fraction of elongating RNA polymerases that pass through, resulting in locked ternary complexes. Cleavage of the nascent transcript by cleavage factors such as GreA or GreB allows the resumption of elongation from the new 3'terminus. GreA releases sequences of 2 to 3 nucleotides. The protein is Transcription elongation factor GreA of Pelobacter propionicus (strain DSM 2379 / NBRC 103807 / OttBd1).